A 663-amino-acid chain; its full sequence is DNA ligase (663 aa).

Residues 33 to 37, 82 to 83, and Glu-112 contribute to the NAD(+) site; these read DYSYD and SI. The N6-AMP-lysine intermediate role is filled by Lys-114. 4 residues coordinate NAD(+): Arg-135, Glu-171, Lys-285, and Lys-309. Residues Cys-403, Cys-406, Cys-419, and Cys-424 each coordinate Zn(2+). Residues 581–663 form the BRCT domain; it reads DKEAPLQGKV…SRILDAKSVS (83 aa).

Belongs to the NAD-dependent DNA ligase family. LigA subfamily. Mg(2+) serves as cofactor. Mn(2+) is required as a cofactor.

It catalyses the reaction NAD(+) + (deoxyribonucleotide)n-3'-hydroxyl + 5'-phospho-(deoxyribonucleotide)m = (deoxyribonucleotide)n+m + AMP + beta-nicotinamide D-nucleotide.. DNA ligase that catalyzes the formation of phosphodiester linkages between 5'-phosphoryl and 3'-hydroxyl groups in double-stranded DNA using NAD as a coenzyme and as the energy source for the reaction. It is essential for DNA replication and repair of damaged DNA. In Chlamydia trachomatis serovar L2 (strain ATCC VR-902B / DSM 19102 / 434/Bu), this protein is DNA ligase.